The primary structure comprises 264 residues: Small ribosomal subunit protein eS1 (264 aa).

The disordered stretch occupies residues 233-264; it reads GEGGGAGKPSGDEAGAKVERADGYEPPVQESV. Basic and acidic residues predominate over residues 242–255; it reads SGDEAGAKVERADG.

The protein belongs to the eukaryotic ribosomal protein eS1 family. In terms of assembly, component of the small ribosomal subunit. Mature ribosomes consist of a small (40S) and a large (60S) subunit. The 40S subunit contains about 33 different proteins and 1 molecule of RNA (18S). The 60S subunit contains about 49 different proteins and 3 molecules of RNA (25S, 5.8S and 5S).

Its subcellular location is the cytoplasm. The polypeptide is Small ribosomal subunit protein eS1 (Eimeria tenella (Coccidian parasite)).